The chain runs to 120 residues: uncharacterized protein (120 aa).

The tract at residues 79 to 120 (TGNEIPPEPEQEVVASPVTEQKKAEPSAPPKGSKKKKRGKKK) is disordered. Residues 110-120 (GSKKKKRGKKK) are compositionally biased toward basic residues.

This is an uncharacterized protein from Schizosaccharomyces pombe (strain 972 / ATCC 24843) (Fission yeast).